The primary structure comprises 763 residues: Pentatricopeptide repeat-containing protein At4g32430, mitochondrial (763 aa).

The N-terminal 38 residues, 1–38, are a transit peptide targeting the mitochondrion; it reads MTLLNYLHCNRSKSFLFQRFYSPYRIAHKLFDGSSQRN. 17 PPR repeats span residues 77-109, 110-140, 141-172, 173-207, 208-238, 239-274, 275-309, 310-344, 350-370, 371-405, 406-436, 437-471, 472-507, 508-538, 539-573, 574-604, and 610-640; these read DEVTLCLALKACRGDLKRGCQIHGFSTTSGFTS, FVCVSNAVMGMYRKAGRFDNALCIFENLVDP, DVVSWNTILSGFDDNQIALNFVVRMKSAGVVF, DAFTYSTALSFCVGSEGFLLGLQLQSTVVKTGLES, DLVVGNSFITMYSRSGSFRGARRVFDEMSFK, DMISWNSLLSGLSQEGTFGFEAVVIFRDMMREGVEL, DHVSFTSVITTCCHETDLKLARQIHGLCIKRGYES, LLEVGNILMSRYSKCGVLEAVKSVFHQMSERNVVS, SSNKDDAVSIFLNMRFDGVYP, NEVTFVGLINAVKCNEQIKEGLKIHGLCIKTGFVS, EPSVGNSFITLYAKFEALEDAKKAFEDITFR, EIISWNAMISGFAQNGFSHEALKMFLSAAAETMPN, EYTFGSVLNAIAFAEDISVKQGQRCHAHLLKLGLNS, CPVVSSALLDMYAKRGNIDESEKVFNEMSQK, NQFVWTSIISAYSSHGDFETVMNLFHKMIKENVAP, DLVTFLSVLTACNRKGMVDKGYEIFNMMIEV, and SHEHYSCMVDMLGRAGRLKEAEELMSEVPGG. The segment at 645-720 is type E motif; it reads MLQSMLGSCR…EAGFSWIDVG (76 aa). A type E(+) motif region spans residues 724–756; that stretch reads GSLTMQGFSSGDKSHPKSDEIYRMVEIIGLEMN.

The protein belongs to the PPR family. PCMP-E subfamily.

It localises to the mitochondrion. In Arabidopsis thaliana (Mouse-ear cress), this protein is Pentatricopeptide repeat-containing protein At4g32430, mitochondrial (PCMP-E40).